An 83-amino-acid chain; its full sequence is MSVRIRLKRMGAKKRPYYRIVVMDSASPRDGRAIEELGYYHPVEMQNQVKINEDKFRDWIGKGAIPSDTVKRILNKNNFKVES.

Belongs to the bacterial ribosomal protein bS16 family.

The chain is Small ribosomal subunit protein bS16 from Borrelia hermsii (strain HS1 / DAH).